Here is a 905-residue protein sequence, read N- to C-terminus: DNA-directed RNA polymerase subunit Rpo1N (905 aa).

Residues C60, C63, C70, H73, C100, C103, C147, and C150 each contribute to the Zn(2+) site. D461, D463, and D465 together coordinate Mg(2+).

This sequence belongs to the RNA polymerase beta' chain family. As to quaternary structure, part of the RNA polymerase complex. Requires Mg(2+) as cofactor. Zn(2+) is required as a cofactor.

It is found in the cytoplasm. It catalyses the reaction RNA(n) + a ribonucleoside 5'-triphosphate = RNA(n+1) + diphosphate. In terms of biological role, DNA-dependent RNA polymerase (RNAP) catalyzes the transcription of DNA into RNA using the four ribonucleoside triphosphates as substrates. Forms the clamp head domain. This chain is DNA-directed RNA polymerase subunit Rpo1N, found in Thermococcus celer.